A 348-amino-acid chain; its full sequence is Protein RecA (348 aa).

Residue 67 to 74 (GPESSGKT) coordinates ATP.

Belongs to the RecA family.

It is found in the cytoplasm. Functionally, can catalyze the hydrolysis of ATP in the presence of single-stranded DNA, the ATP-dependent uptake of single-stranded DNA by duplex DNA, and the ATP-dependent hybridization of homologous single-stranded DNAs. It interacts with LexA causing its activation and leading to its autocatalytic cleavage. In Salinispora tropica (strain ATCC BAA-916 / DSM 44818 / JCM 13857 / NBRC 105044 / CNB-440), this protein is Protein RecA.